We begin with the raw amino-acid sequence, 109 residues long: Nucleoid-associated protein BU482 (109 aa).

Belongs to the YbaB/EbfC family. As to quaternary structure, homodimer.

The protein localises to the cytoplasm. It is found in the nucleoid. Functionally, binds to DNA and alters its conformation. May be involved in regulation of gene expression, nucleoid organization and DNA protection. The protein is Nucleoid-associated protein BU482 of Buchnera aphidicola subsp. Acyrthosiphon pisum (strain APS) (Acyrthosiphon pisum symbiotic bacterium).